The following is a 433-amino-acid chain: tRNA modification GTPase MnmE (433 aa).

Residues arginine 24, glutamate 81, and arginine 120 each contribute to the (6S)-5-formyl-5,6,7,8-tetrahydrofolate site. The TrmE-type G domain maps to 216 to 359 (GVEIVVLGAP…LLAALRARVE (144 aa)). Residue asparagine 226 coordinates K(+). Residues 226–231 (NAGKST), 245–251 (SDIPGTT), 270–273 (DTAG), and 340–342 (SAR) contribute to the GTP site. Serine 230 is a Mg(2+) binding site. K(+) contacts are provided by serine 245, isoleucine 247, and threonine 250. Residue threonine 251 coordinates Mg(2+). Residue lysine 433 participates in (6S)-5-formyl-5,6,7,8-tetrahydrofolate binding.

Belongs to the TRAFAC class TrmE-Era-EngA-EngB-Septin-like GTPase superfamily. TrmE GTPase family. In terms of assembly, homodimer. Heterotetramer of two MnmE and two MnmG subunits. K(+) serves as cofactor.

Its subcellular location is the cytoplasm. Exhibits a very high intrinsic GTPase hydrolysis rate. Involved in the addition of a carboxymethylaminomethyl (cmnm) group at the wobble position (U34) of certain tRNAs, forming tRNA-cmnm(5)s(2)U34. The polypeptide is tRNA modification GTPase MnmE (Acidiphilium cryptum (strain JF-5)).